The sequence spans 270 residues: 1-deoxy-11-beta-hydroxypentalenate dehydrogenase (270 aa).

12 to 36 (GAASGIGFALSARLAQAGARVVMTD) contributes to the NAD(+) binding site. Ser-144 serves as a coordination point for substrate. Residue Tyr-157 is the Proton acceptor of the active site. Residue Lys-161 coordinates NAD(+).

The protein belongs to the short-chain dehydrogenases/reductases (SDR) family.

It catalyses the reaction 1-deoxy-11beta-hydroxypentalenate + NAD(+) = 1-deoxy-11-oxopentalenate + NADH + H(+). It functions in the pathway antibiotic biosynthesis; neopentalenolactone biosynthesis. Functionally, catalyzes the oxidation of 1-deoxy-11-beta-hydroxypentalenic acid to 1-deoxy-11-oxopentalenic acid in the biosynthesis of neopentalenolactone antibiotic. The protein is 1-deoxy-11-beta-hydroxypentalenate dehydrogenase (ptlF) of Streptomyces avermitilis (strain ATCC 31267 / DSM 46492 / JCM 5070 / NBRC 14893 / NCIMB 12804 / NRRL 8165 / MA-4680).